Consider the following 431-residue polypeptide: Chorismate synthase 2, chloroplastic (431 aa).

The transit peptide at methionine 1–alanine 48 directs the protein to the chloroplast. The disordered stretch occupies residues aspartate 93–aspartate 141. Residues cysteine 112–serine 126 are compositionally biased toward polar residues.

Belongs to the chorismate synthase family. As to quaternary structure, homotetramer. FMNH2 is required as a cofactor. Predominantly expressed in flowers and roots and, to a lesser extent, in stems, leaves, and cotyledons.

It localises to the plastid. Its subcellular location is the chloroplast. It catalyses the reaction 5-O-(1-carboxyvinyl)-3-phosphoshikimate = chorismate + phosphate. The protein operates within metabolic intermediate biosynthesis; chorismate biosynthesis; chorismate from D-erythrose 4-phosphate and phosphoenolpyruvate: step 7/7. In terms of biological role, catalyzes the last common step of the biosynthesis of aromatic amino acids, produced via the shikimic acid pathway. This Solanum lycopersicum (Tomato) protein is Chorismate synthase 2, chloroplastic (CS2).